Reading from the N-terminus, the 188-residue chain is UPF0461 protein C5orf24 (188 aa).

Positions 1–10 (MMHPVASSNP) are enriched in polar residues. Residues 1–20 (MMHPVASSNPAFCGPGKPSC) are disordered. S37 carries the post-translational modification Phosphoserine. Residue K75 forms a Glycyl lysine isopeptide (Lys-Gly) (interchain with G-Cter in SUMO2) linkage. The disordered stretch occupies residues 79–142 (KKKKNLNRSG…GYKVSPGRPP (64 aa)). The segment covering 80-92 (KKKNLNRSGKRGR) has biased composition (basic residues). Over residues 94-107 (SGTTKSAGYRTSTG) the composition is skewed to polar residues. 2 positions are modified to phosphoserine: S121 and S180. K184 participates in a covalent cross-link: Glycyl lysine isopeptide (Lys-Gly) (interchain with G-Cter in SUMO2).

The protein belongs to the UPF0461 family.

This is UPF0461 protein C5orf24 (C5orf24) from Homo sapiens (Human).